We begin with the raw amino-acid sequence, 252 residues long: Large ribosomal subunit protein uL29m (252 aa).

The transit peptide at 1–39 (MSTSTVIRPVARSLLQLRKAGNTPPAFLLPCLQSSSTTS) directs the protein to the mitochondrion. Over residues 233 to 242 (EDVLAEAEGE) the composition is skewed to acidic residues. Positions 233–252 (EDVLAEAEGEAEPKPAQVTA) are disordered.

It belongs to the universal ribosomal protein uL29 family. As to quaternary structure, component of the mitochondrial large ribosomal subunit. Mature mitochondrial ribosomes consist of a small (37S) and a large (54S) subunit. The 37S subunit contains at least 33 different proteins and 1 molecule of RNA (15S). The 54S subunit contains at least 45 different proteins and 1 molecule of RNA (21S).

The protein localises to the mitochondrion. This chain is Large ribosomal subunit protein uL29m (mrpl4), found in Botryotinia fuckeliana (strain B05.10) (Noble rot fungus).